The sequence spans 1617 residues: Mitogen-activated protein kinase kinae kinase bck1 (1617 aa).

Disordered stretches follow at residues 1–73 (MDGQ…SQLQ), 167–199 (GPVH…RTMP), 211–253 (SVAS…GGMS), 345–399 (RQIH…SPNL), 455–555 (DHRR…SSSY), 568–633 (KRSK…LRGK), 739–820 (GVPL…ISPE), 832–1144 (EHKR…RGDI), and 1164–1277 (DIDL…EILR). Positions 19 to 28 (TQPSQSHMLS) are enriched in low complexity. The segment covering 44-60 (VMPPPPPGPPPGPPPGP) has biased composition (pro residues). Polar residues predominate over residues 220-248 (TAQNHQSQTGQTNEPTKSPSHRQNNSNTL). Positions 482–504 (KSGSPATQHATLNQGLSSSSTGD) are enriched in polar residues. Positions 524–533 (RYYESRKGQE) are enriched in basic and acidic residues. Composition is skewed to polar residues over residues 535–555 (IRPS…SSSY) and 586–596 (ESPTSPVNLRQ). 2 stretches are compositionally biased toward basic and acidic residues: residues 832–841 (EHKREVERKQ) and 871–885 (FDER…KKAD). Composition is skewed to polar residues over residues 897–907 (PQESYTLTRIN) and 956–980 (GGKQ…PQSS). 2 stretches are compositionally biased toward basic and acidic residues: residues 1128–1140 (EDER…DSFA) and 1189–1198 (PENDLHKKEN). Composition is skewed to polar residues over residues 1199-1208 (QPSSSYTGEM) and 1257-1272 (NQAS…NQKS). The region spanning 1323–1596 (IIRGQLIGKG…QTLLTRHPFC (274 aa)) is the Protein kinase domain. ATP contacts are provided by residues 1329-1337 (IGKGTYGRV) and K1352. The active-site Proton acceptor is D1453.

It belongs to the protein kinase superfamily. STE Ser/Thr protein kinase family. MAP kinase kinase subfamily.

It catalyses the reaction L-seryl-[protein] + ATP = O-phospho-L-seryl-[protein] + ADP + H(+). The catalysed reaction is L-threonyl-[protein] + ATP = O-phospho-L-threonyl-[protein] + ADP + H(+). Functionally, mitogen-activated kinase kinase kinase (MAPKKK), part of the cell wall integrity (CWI) signaling pathway composed by three protein kinases bck1, mkk2 and mpkA and responsible for the maintaining of cell-wall integrity balance. The CWI pathway also regulates the oxidative stress response, as well as the production of some secondary metabolites including pyomelanin. The sequence is that of Mitogen-activated protein kinase kinae kinase bck1 from Aspergillus fumigatus (strain CBS 144.89 / FGSC A1163 / CEA10) (Neosartorya fumigata).